The following is a 562-amino-acid chain: Arginine--tRNA ligase (562 aa).

The short motif at 129-139 (ANPTGPLHVGH) is the 'HIGH' region element.

The protein belongs to the class-I aminoacyl-tRNA synthetase family. In terms of assembly, monomer.

The protein resides in the cytoplasm. It carries out the reaction tRNA(Arg) + L-arginine + ATP = L-arginyl-tRNA(Arg) + AMP + diphosphate. This Xylella fastidiosa (strain 9a5c) protein is Arginine--tRNA ligase (argS).